A 153-amino-acid polypeptide reads, in one-letter code: UPF0743 protein YCR087C-A (153 aa).

2 C2HC LYAR-type zinc fingers span residues 1 to 26 (MVTF…YRCP) and 27 to 52 (NAYY…TSCI). Residues C6, C9, H21, C25, C32, C35, H48, and C51 each coordinate Zn(2+). Positions 63-96 (YKGNKKQKQKQQQKQQQKQHQHQPVATPAKKVEK) are disordered. Basic residues predominate over residues 65-83 (GNKKQKQKQQQKQQQKQHQ).

This sequence belongs to the UPF0743 family.

It is found in the nucleus. Its subcellular location is the nucleolus. The chain is UPF0743 protein YCR087C-A from Saccharomyces cerevisiae (strain ATCC 204508 / S288c) (Baker's yeast).